A 411-amino-acid polypeptide reads, in one-letter code: Dihydrolipoyllysine-residue succinyltransferase component of 2-oxoglutarate dehydrogenase complex (411 aa).

In terms of domain architecture, Lipoyl-binding spans Thr2–Glu77. The residue at position 43 (Lys43) is an N6-lipoyllysine. Residues Ser82–Glu100 show a composition bias toward low complexity. The interval Ser82 to Ser115 is disordered. Residues Leu101–Met110 are compositionally biased toward polar residues. Positions Pro111–Leu148 constitute a Peripheral subunit-binding (PSBD) domain. Active-site residues include His382 and Asp386.

Belongs to the 2-oxoacid dehydrogenase family. In terms of assembly, forms a 24-polypeptide structural core with octahedral symmetry. Part of the 2-oxoglutarate dehydrogenase (OGDH) complex composed of E1 (2-oxoglutarate dehydrogenase), E2 (dihydrolipoamide succinyltransferase) and E3 (dihydrolipoamide dehydrogenase); the complex contains multiple copies of the three enzymatic components (E1, E2 and E3). (R)-lipoate serves as cofactor.

The enzyme catalyses N(6)-[(R)-dihydrolipoyl]-L-lysyl-[protein] + succinyl-CoA = N(6)-[(R)-S(8)-succinyldihydrolipoyl]-L-lysyl-[protein] + CoA. Its pathway is amino-acid degradation; L-lysine degradation via saccharopine pathway; glutaryl-CoA from L-lysine: step 6/6. Its function is as follows. E2 component of the 2-oxoglutarate dehydrogenase (OGDH) complex which catalyzes the second step in the conversion of 2-oxoglutarate to succinyl-CoA and CO(2). The polypeptide is Dihydrolipoyllysine-residue succinyltransferase component of 2-oxoglutarate dehydrogenase complex (sucB) (Bartonella vinsonii subsp. berkhoffii).